Here is a 606-residue protein sequence, read N- to C-terminus: Zinc finger protein 652 (606 aa).

At serine 57 the chain carries Phosphoserine. The span at 71–97 shows a compositional bias: basic and acidic residues; sequence HLHETEEQPYFRETRAVSDVHAVKEDR. Disordered regions lie at residues 71-113 and 130-235; these read HLHE…VSYK and VSKG…APVQ. Residues 98–109 are compositionally biased toward acidic residues; it reads ENSDDTEEEEEE. Serine 100 bears the Phosphoserine mark. Threonine 103 is modified (phosphothreonine). Over residues 137-149 the composition is skewed to polar residues; the sequence is VSSQSKETPVLKT. Over residues 152–170 the composition is skewed to acidic residues; the sequence is EEEEEESEEEATDDSNDYG. Positions 171–183 are enriched in basic and acidic residues; sequence ENEKQKKKEKIVE. A compositionally biased stretch (low complexity) spans 184 to 209; that stretch reads KVSVTQRRTRRAASVAAATTSPTPRT. Residues serine 197 and serine 204 each carry the phosphoserine modification. Residues 245 to 268 form a C2H2-type 1 zinc finger; it reads LTCEKCPRVFNTRWYLEKHMNVTH. The C2H2-type 2; degenerate zinc finger occupies 272-294; sequence QICDKCGKKFVLESELSLHQQTD. C2H2-type zinc fingers lie at residues 299-322, 329-351, 357-379, 385-407, 413-435, and 441-463; these read IQCVSCNKSFKKLWSLHEHIKIVH, FSCEICEKKFYTMAHVRKHMVAH, FTCETCGKSFKRSMSLKVHSLQH, FRCENCDERFQYKYQLRSHMSIH, FMCQWCGKDFNMKQYFDEHMKTH, and FICEICGKSFTSRPNMKRHRRTH. The C2H2-type 9; degenerate zinc-finger motif lies at 469–492; it reads YPCDVCGQRFRFSNMLKAHKEKCF. A mediates interaction with CBFA2T3 region spans residues 498-606; the sequence is VNVPPAVQIP…AEKNSSAQHH (109 aa).

It belongs to the krueppel C2H2-type zinc-finger protein family. Interacts with CBFA2T3. Widely expressed with higher expression in breast, prostate, vulva and pancreas.

The protein localises to the nucleus. Functions as a transcriptional repressor. In Homo sapiens (Human), this protein is Zinc finger protein 652 (ZNF652).